Here is a 121-residue protein sequence, read N- to C-terminus: Ribosome-binding factor A (121 aa).

This sequence belongs to the RbfA family. In terms of assembly, monomer. Binds 30S ribosomal subunits, but not 50S ribosomal subunits or 70S ribosomes.

Its subcellular location is the cytoplasm. One of several proteins that assist in the late maturation steps of the functional core of the 30S ribosomal subunit. Associates with free 30S ribosomal subunits (but not with 30S subunits that are part of 70S ribosomes or polysomes). Required for efficient processing of 16S rRNA. May interact with the 5'-terminal helix region of 16S rRNA. This is Ribosome-binding factor A from Clostridium kluyveri (strain NBRC 12016).